The sequence spans 65 residues: MIVPVRCFTCGKVLADKYYEFKKRVEAGEDPGKVLDDLGVERYCCRRTLLSHVELIDQVMVYKVY.

Zn(2+) contacts are provided by Cys-7, Cys-10, Cys-44, and Cys-45.

It belongs to the archaeal Rpo10/eukaryotic RPB10 RNA polymerase subunit family. As to quaternary structure, part of the RNA polymerase complex. Requires Zn(2+) as cofactor.

Its subcellular location is the cytoplasm. The protein resides in the chromosome. It carries out the reaction RNA(n) + a ribonucleoside 5'-triphosphate = RNA(n+1) + diphosphate. DNA-dependent RNA polymerase (RNAP) catalyzes the transcription of DNA into RNA using the four ribonucleoside triphosphates as substrates. In Thermococcus kodakarensis (strain ATCC BAA-918 / JCM 12380 / KOD1) (Pyrococcus kodakaraensis (strain KOD1)), this protein is DNA-directed RNA polymerase subunit Rpo10.